The sequence spans 136 residues: Large ribosomal subunit protein bL21 (136 aa).

The interval R107–E136 is disordered. The segment covering A121–E136 has biased composition (low complexity).

Belongs to the bacterial ribosomal protein bL21 family. Part of the 50S ribosomal subunit. Contacts protein L20.

Its function is as follows. This protein binds to 23S rRNA in the presence of protein L20. This is Large ribosomal subunit protein bL21 from Acidothermus cellulolyticus (strain ATCC 43068 / DSM 8971 / 11B).